Here is a 301-residue protein sequence, read N- to C-terminus: ATP synthase gamma chain (301 aa).

It belongs to the ATPase gamma chain family. As to quaternary structure, F-type ATPases have 2 components, CF(1) - the catalytic core - and CF(0) - the membrane proton channel. CF(1) has five subunits: alpha(3), beta(3), gamma(1), delta(1), epsilon(1). CF(0) has three main subunits: a, b and c.

Its subcellular location is the cell inner membrane. Produces ATP from ADP in the presence of a proton gradient across the membrane. The gamma chain is believed to be important in regulating ATPase activity and the flow of protons through the CF(0) complex. This Helicobacter pylori (strain Shi470) protein is ATP synthase gamma chain.